A 337-amino-acid chain; its full sequence is Transaldolase (337 aa).

A Nuclear localization signal motif is present at residues 1-10 (MSSSPVKRQR). Lys115 is modified (N6-acetyllysine). Lys142 (schiff-base intermediate with substrate) is an active-site residue. An N6-acetyllysine modification is found at Lys219. 2 positions are modified to phosphoserine: Ser237 and Ser256. N6-acetyllysine is present on residues Lys269, Lys286, and Lys321.

Belongs to the transaldolase family. Type 1 subfamily. In terms of assembly, homodimer. Heterodimer with isoform 2. Interacts with KPNA1 and KPNA4.

The protein resides in the nucleus. It localises to the cytoplasm. The enzyme catalyses D-sedoheptulose 7-phosphate + D-glyceraldehyde 3-phosphate = D-erythrose 4-phosphate + beta-D-fructose 6-phosphate. Its pathway is carbohydrate degradation; pentose phosphate pathway; D-glyceraldehyde 3-phosphate and beta-D-fructose 6-phosphate from D-ribose 5-phosphate and D-xylulose 5-phosphate (non-oxidative stage): step 2/3. Functionally, catalyzes the rate-limiting step of the non-oxidative phase in the pentose phosphate pathway. Catalyzes the reversible conversion of sedheptulose-7-phosphate and D-glyceraldehyde 3-phosphate into erythrose-4-phosphate and beta-D-fructose 6-phosphate. Not only acts as a pentose phosphate pathway enzyme, but also affects other metabolite pathways by altering its subcellular localization between the nucleus and the cytoplasm. In Homo sapiens (Human), this protein is Transaldolase.